Consider the following 748-residue polypeptide: Antigen peptide transporter 1 (748 aa).

Residues 1 to 15 (MASSRCPAPRGCRCL) lie on the Cytoplasmic side of the membrane. A helical membrane pass occupies residues 16–36 (PGASLAWLGTVLLLLADWVLL). At 37-53 (RTALPRIFSLLVPTALP) the chain is on the lumenal side. Residues 54–76 (LLRVWAVGLSRWAVLWLGACGVL) form a helical membrane-spanning segment. The Cytoplasmic segment spans residues 77 to 92 (RATVGSKSENAGAQGW). A helical transmembrane segment spans residues 93-113 (LAALKPLAAALGLALPGLALF). Residues 114-133 (RELISWGAPGSADSTRLLHW) are Lumenal-facing. A helical membrane pass occupies residues 134–154 (GSHPTAFVVSYAAALPAAALW). Topologically, residues 155–186 (HKLGSLWVPGGQGGSGNPVRRLLGCLGSETRR) are cytoplasmic. A helical transmembrane segment spans residues 187–207 (LSLFLVLVVLSSLGEMAIPFF). The region spanning 187-470 (LSLFLVLVVL…LLSIYPRVQK (284 aa)) is the ABC transmembrane type-1 domain. At 208 to 227 (TGRLTDWILQDGSADTFTRN) the chain is on the lumenal side. A helical membrane pass occupies residues 228–248 (LTLMSILTIASAVLEFVGDGI). Topologically, residues 249–298 (YNNTMGHVHSHLQGEVFGAVLRQETEFFQQNQTGNIMSRVTEDTSTLSDS) are cytoplasmic. Residues 299–319 (LSENLSLFLWYLVRGLCLLGI) traverse the membrane as a helical segment. Residues 320–328 (MLWGSVSLT) lie on the Lumenal side of the membrane. The chain crosses the membrane as a helical span at residues 329-349 (MVTLITLPLLFLLPKKVGKWY). Residues 350–418 (QLLEVQVRES…AVNSWTTSIS (69 aa)) lie on the Cytoplasmic side of the membrane. The interval 375–420 (PTVRSFANEEGEAQKFREKLQEIKTLNQKEAVAYAVNSWTTSISGM) is part of the peptide-binding site. A helical membrane pass occupies residues 419–439 (GMLLKVGILYIGGQLVTSGAV). Residues 440–443 (SSGN) lie on the Lumenal side of the membrane. A helical transmembrane segment spans residues 444 to 464 (LVTFVLYQMQFTQAVEVLLSI). Residues 453–487 (QFTQAVEVLLSIYPRVQKAVGSSEKIFEYLDRTPR) form a part of the peptide-binding site region. Residues 465-748 (YPRVQKAVGS…MVQAPADAPE (284 aa)) lie on the Cytoplasmic side of the membrane. The ABC transporter domain maps to 503-742 (VQFQDVSFAY…KGCYWAMVQA (240 aa)). ATP is bound by residues 538-546 (GPNGSGKST), 641-647 (SQLSGGQ), and Gln701. Residue Ser545 coordinates Mg(2+).

It belongs to the ABC transporter superfamily. ABCB family. MHC peptide exporter (TC 3.A.1.209) subfamily. In terms of assembly, heterodimer of TAP1 and TAP2 (TAP1-TAP2). A component of the peptide loading complex (PLC), interacts via TAPBP with MHCI heterodimer; this interaction mediates peptide-MHCI assembly. Recruits TAPBP in a 1:1 stoichiometry. Interacts with classical MHCI such as HLA-A*02-B2M; this interaction is obligatory for the loading of peptide epitopes. Interacts with non-classical MHCI molecules including HLA-E-B2M and HLA-F-B2M as well as PLC component CALR before the peptide loading. Interacts with PSMB5 and PSMB8. As to quaternary structure, (Microbial infection) Interacts with Epstein-Barr virus BNLF2a. (Microbial infection) Interacts with herpes simplex virus US12/ICP47. In terms of assembly, (Microbial infection) Interacts with adenovirus E3-19K glycoprotein, which binds TAP1-TAP2 and acts as a TAPBP inhibitor, preventing TAP1-TAP2 association with MHCI. Mg(2+) is required as a cofactor. Highly expressed in professional APCs monocytes and dendritic cells as well as in lymphocyte subsets T cells, B cells and NK cells.

The protein resides in the endoplasmic reticulum membrane. It carries out the reaction a peptide antigen(in) + ATP + H2O = a peptide antigen(out) + ADP + phosphate + H(+). Inhibited at high ER lumenal peptide concentrations. Its activity is regulated as follows. (Microbial infection) Inhibited by herpes simplex virus US12/ICP47 protein, which blocks the peptide-binding site of TAP1-TAP2. With respect to regulation, (Microbial infection) Inhibited by human cytomegalovirus US6 glycoprotein, which binds to the lumenal side of TAP1-TAP2 complex and inhibits peptide translocation by specifically blocking ATP-binding and preventing TAP1-TAP2 conformational rearrangement induced by peptide binding. ABC transporter associated with antigen processing. In complex with TAP2 mediates unidirectional translocation of peptide antigens from cytosol to endoplasmic reticulum (ER) for loading onto MHC class I (MHCI) molecules. Uses the chemical energy of ATP to export peptides against the concentration gradient. During the transport cycle alternates between 'inward-facing' state with peptide binding site facing the cytosol to 'outward-facing' state with peptide binding site facing the ER lumen. Peptide antigen binding to ATP-loaded TAP1-TAP2 induces a switch to hydrolysis-competent 'outward-facing' conformation ready for peptide loading onto nascent MHCI molecules. Subsequently ATP hydrolysis resets the transporter to the 'inward facing' state for a new cycle. Typically transports intracellular peptide antigens of 8 to 13 amino acids that arise from cytosolic proteolysis via IFNG-induced immunoproteasome. Binds peptides with free N- and C-termini, the first three and the C-terminal residues being critical. Preferentially selects peptides having a highly hydrophobic residue at position 3 and hydrophobic or charged residues at the C-terminal anchor. Proline at position 2 has the most destabilizing effect. As a component of the peptide loading complex (PLC), acts as a molecular scaffold essential for peptide-MHCI assembly and antigen presentation. This is Antigen peptide transporter 1 from Homo sapiens (Human).